We begin with the raw amino-acid sequence, 157 residues long: Probable calcium-binding protein CML23 (157 aa).

4 EF-hand domains span residues 11 to 46 (GSMEDIKKVFQRFDKNNDGKISIDELKDVIGALSPN), 47 to 82 (ASQEETKAMMKEFDLDGNGFIDLDEFVALFQISDQS), 86 to 121 (SAIRDLKEAFDLYDLDRNGRISANELHSVMKNLGEK), and 122 to 157 (CSIQDCQRMINKVDSDGDGCVDFEEFKKMMMINGSA). Ca(2+) is bound by residues D24, N26, D28, K30, E35, D60, D62, N64, E71, D99, D101, N103, R105, E110, D135, D137, D139, C141, and E146.

Potential calcium sensor. This is Probable calcium-binding protein CML23 (CML23) from Arabidopsis thaliana (Mouse-ear cress).